We begin with the raw amino-acid sequence, 1128 residues long: Cordon-bleu protein-like 1 (1128 aa).

Residues 1–35 (MDGRTPRPQDAPARRKPKAKAPLPPAETKYTDVSS) form a disordered region. Thr139 bears the Phosphothreonine mark. Residues Ser204, Ser222, and Ser256 each carry the phosphoserine modification. Disordered stretches follow at residues 249–309 (KKRD…VPQD), 325–441 (MSVD…SPKS), and 454–499 (TLKN…TSNG). Thr260 carries the post-translational modification Phosphothreonine. Positions 270–286 (FTRSNTISKPYISNTLP) are enriched in polar residues. Phosphoserine is present on Ser273. Thr284 carries the phosphothreonine modification. A KKRRAP 1 motif is present at residues 291 to 296 (KKRRAP). Ser326, Ser333, Ser344, and Ser356 each carry phosphoserine. The segment covering 345–357 (LQLSSMSAGNSSL) has biased composition (polar residues). A KKRRAP 2 motif is present at residues 360-365 (TKRKAP). Over residues 397 to 415 (SEANSPEELSSPAGISSDY) the composition is skewed to polar residues. Positions 416–425 (SLEEIDEKEE) are enriched in acidic residues. 5 positions are modified to phosphoserine: Ser438, Ser441, Ser461, Ser471, and Ser474. The span at 475-488 (MEEKQETKSTDGQE) shows a compositional bias: basic and acidic residues. A phosphoserine mark is found at Ser563, Ser584, Ser786, Ser813, Ser814, and Ser821. Disordered stretches follow at residues 780 to 840 (TEDS…PFAP), 882 to 964 (SAAA…SQVS), 995 to 1081 (RSQS…PEQM), and 1103 to 1128 (IPSNTISVNGRSRLSHSMSPDAQDGH). The segment covering 899 to 908 (LTNKEAERDM) has biased composition (basic and acidic residues). Phosphoserine occurs at positions 911, 917, 947, 1069, and 1070. 2 stretches are compositionally biased toward polar residues: residues 1045 to 1081 (SAHNEQNSQIPTPTDGPSFTVMRQSSLTFQSSDPEQM) and 1103 to 1122 (IPSNTISVNGRSRLSHSMSP). Positions 1081-1101 (MRQSLLTAIRSGEAAAKLKRV) constitute a WH2 domain. Phosphoserine is present on Ser1121.

The sequence is that of Cordon-bleu protein-like 1 from Homo sapiens (Human).